The following is a 473-amino-acid chain: MALQTREARTLAEKVWDDHVVVSGRNEAPDLIYIDLHQVHEVTSPQAFDGLRLAGRPVRRPDLTIATEDHNVPTVDIDKPIADPVSRTQVETLRRNCAEFGIRLHPMGDVEQGIVHVVGPQLGLTQPGMTIVCGDSHTSTHGAFGALAMGIGTSEVEHVLATQTLPLWPFKTMAVNVDGQLPAGVSAKDIILALIAKIGTGGGQGHVIEYQGSAIESLSMEGRMTICNMSIEAGARAGMVAPDETTYEYLRNRPHAPTGAQWDAALGYWQQLRTDPGAVFDTEVHLDAAELSPFVTWGTNPGQGVPLCATVPDPELIGDDGERQAAEKALAYMDLEPGKAMRDIAVDAVFVGSCTNGRIEDLRVVAEVLRGRKVAPGVRMLIVPGSMRVRAQAEKEGLGEVFTVAGAEWRQAGCSMCLGMNPDQLAPGERCAATSNRNFEGRQGKGGRTHLVSPAVAAATAVRGTLSAPADLN.

The [4Fe-4S] cluster site is built by cysteine 354, cysteine 414, and cysteine 417.

It belongs to the aconitase/IPM isomerase family. LeuC type 1 subfamily. Heterodimer of LeuC and LeuD. It depends on [4Fe-4S] cluster as a cofactor.

The enzyme catalyses (2R,3S)-3-isopropylmalate = (2S)-2-isopropylmalate. The protein operates within amino-acid biosynthesis; L-leucine biosynthesis; L-leucine from 3-methyl-2-oxobutanoate: step 2/4. Catalyzes the isomerization between 2-isopropylmalate and 3-isopropylmalate, via the formation of 2-isopropylmaleate. This chain is 3-isopropylmalate dehydratase large subunit, found in Mycobacterium ulcerans (strain Agy99).